The sequence spans 732 residues: X-ray repair cross-complementing protein 5 (732 aa).

The 153-residue stretch at 9 to 161 folds into the VWFA domain; that stretch reads AVVLCVDVGV…CNLKKSGISL (153 aa). Residues 138-165 are leucine-zipper; it reads LSSPFSQDQLDVIICNLKKSGISLQFFL. Residue lysine 195 forms a Glycyl lysine isopeptide (Lys-Gly) (interchain with G-Cter in SUMO2) linkage. Residues 253 to 453 form the Ku domain; sequence IGPNLSIKIV…CTPTEAQLSA (201 aa). A Phosphoserine modification is found at serine 258. At lysine 265 the chain carries N6-acetyllysine. Position 318 is a phosphoserine (serine 318). Residue lysine 332 is modified to N6-acetyllysine. Glycyl lysine isopeptide (Lys-Gly) (interchain with G-Cter in SUMO2) cross-links involve residues lysine 532 and lysine 534. Threonine 535 is subject to Phosphothreonine. Glycyl lysine isopeptide (Lys-Gly) (interchain with G-Cter in SUMO2) cross-links involve residues lysine 567 and lysine 569. A phosphoserine; by PRKDC mark is found at serine 578, serine 580, and serine 581. Lysine 666 bears the N6-acetyllysine mark. Residues lysine 670 and lysine 689 each participate in a glycyl lysine isopeptide (Lys-Gly) (interchain with G-Cter in SUMO2) cross-link. Positions 708-732 are disordered; that stretch reads PKDKAKEDTTGPEEAGDVDDLLDMI. Threonine 716 is modified (phosphothreonine; by PRKDC). Positions 717-732 are enriched in acidic residues; that stretch reads TGPEEAGDVDDLLDMI. Positions 720-728 match the EEXXXDL motif motif; sequence EEAGDVDDL.

Belongs to the ku80 family. In terms of assembly, heterodimer composed of XRCC5/Ku80 and XRCC6/Ku70. Component of the core long-range non-homologous end joining (NHEJ) complex (also named DNA-PK complex) composed of PRKDC, LIG4, XRCC4, XRCC6/Ku70, XRCC5/Ku86 and NHEJ1/XLF. Additional component of the NHEJ complex includes PAXX. Following autophosphorylation, PRKDC dissociates from DNA, leading to formation of the short-range NHEJ complex, composed of LIG4, XRCC4, XRCC6/Ku70, XRCC5/Ku86 and NHEJ1/XLF. The XRCC5-XRCC6 dimer also associates with NAA15, and this complex displays DNA binding activity towards the osteocalcin FGF response element (OCFRE). In addition, XRCC5 binds to the osteoblast-specific transcription factors MSX2 and RUNX2. Interacts with ELF3. Interacts with APLF (via KBM motif). The XRCC5/XRCC6 dimer associates in a DNA-dependent manner with APEX1. Identified in a complex with DEAF1 and XRCC6. Interacts with NR4A3; the DNA-dependent protein kinase complex DNA-PK phosphorylates and activates NR4A3 and prevents NR4A3 ubiquitinylation and degradation. Interacts with RNF138. Interacts with CYREN (via KBM motif). Interacts with WRN (via KBM motif). Interacts (via N-terminus) with HSF1 (via N-terminus); this interaction is direct and prevents XRCC5/XRCC6 heterodimeric binding and non-homologous end joining (NHEJ) repair activities induced by ionizing radiation (IR). Interacts with DHX9; this interaction occurs in a RNA-dependent manner. Part of the HDP-RNP complex composed of at least HEXIM1, PRKDC, XRCC5, XRCC6, paraspeckle proteins (SFPQ, NONO, PSPC1, RBM14, and MATR3) and NEAT1 RNA. Interacts with ERCC6. Interacts with ATF7. The XRCC5-XRCC6 dimer associates with ALKBH2. Interacts with TPRN; TPRN interacts with a number of DNA damage response proteins, is recruited to sites of DNA damage and may play a role in DNA damage repair. Interacts with ERCC6L2. In terms of processing, ADP-ribosylated by PARP3. Post-translationally, phosphorylated on serine residues. Phosphorylation by PRKDC may enhance helicase activity. Sumoylated. In terms of processing, ubiquitinated by RNF8 via 'Lys-48'-linked ubiquitination following DNA damage, leading to its degradation and removal from DNA damage sites. Ubiquitinated by RNF138, leading to remove the Ku complex from DNA breaks.

The protein localises to the nucleus. The protein resides in the nucleolus. Its subcellular location is the chromosome. Its function is as follows. Single-stranded DNA-dependent ATP-dependent helicase that plays a key role in DNA non-homologous end joining (NHEJ) by recruiting DNA-PK to DNA. Required for double-strand break repair and V(D)J recombination. Also has a role in chromosome translocation. The DNA helicase II complex binds preferentially to fork-like ends of double-stranded DNA in a cell cycle-dependent manner. It works in the 3'-5' direction. During NHEJ, the XRCC5-XRRC6 dimer performs the recognition step: it recognizes and binds to the broken ends of the DNA and protects them from further resection. Binding to DNA may be mediated by XRCC6. The XRCC5-XRRC6 dimer acts as a regulatory subunit of the DNA-dependent protein kinase complex DNA-PK by increasing the affinity of the catalytic subunit PRKDC to DNA by 100-fold. The XRCC5-XRRC6 dimer is probably involved in stabilizing broken DNA ends and bringing them together. The assembly of the DNA-PK complex to DNA ends is required for the NHEJ ligation step. The XRCC5-XRRC6 dimer probably also acts as a 5'-deoxyribose-5-phosphate lyase (5'-dRP lyase), by catalyzing the beta-elimination of the 5' deoxyribose-5-phosphate at an abasic site near double-strand breaks. XRCC5 probably acts as the catalytic subunit of 5'-dRP activity, and allows to 'clean' the termini of abasic sites, a class of nucleotide damage commonly associated with strand breaks, before such broken ends can be joined. The XRCC5-XRRC6 dimer together with APEX1 acts as a negative regulator of transcription. In association with NAA15, the XRCC5-XRRC6 dimer binds to the osteocalcin promoter and activates osteocalcin expression. As part of the DNA-PK complex, involved in the early steps of ribosome assembly by promoting the processing of precursor rRNA into mature 18S rRNA in the small-subunit processome. Binding to U3 small nucleolar RNA, recruits PRKDC and XRCC5/Ku86 to the small-subunit processome. Plays a role in the regulation of DNA virus-mediated innate immune response by assembling into the HDP-RNP complex, a complex that serves as a platform for IRF3 phosphorylation and subsequent innate immune response activation through the cGAS-STING pathway. In Mus musculus (Mouse), this protein is X-ray repair cross-complementing protein 5 (Xrcc5).